The sequence spans 399 residues: Nicotinate phosphoribosyltransferase (399 aa).

Phosphohistidine; by autocatalysis is present on His-217.

The protein belongs to the NAPRTase family. In terms of processing, transiently phosphorylated on a His residue during the reaction cycle. Phosphorylation strongly increases the affinity for substrates and increases the rate of nicotinate D-ribonucleotide production. Dephosphorylation regenerates the low-affinity form of the enzyme, leading to product release.

The catalysed reaction is nicotinate + 5-phospho-alpha-D-ribose 1-diphosphate + ATP + H2O = nicotinate beta-D-ribonucleotide + ADP + phosphate + diphosphate. It participates in cofactor biosynthesis; NAD(+) biosynthesis; nicotinate D-ribonucleotide from nicotinate: step 1/1. In terms of biological role, catalyzes the synthesis of beta-nicotinate D-ribonucleotide from nicotinate and 5-phospho-D-ribose 1-phosphate at the expense of ATP. The polypeptide is Nicotinate phosphoribosyltransferase (Burkholderia ambifaria (strain MC40-6)).